The chain runs to 115 residues: Nucleoid-associated protein NATL1_00191 (115 aa).

A disordered region spans residues 89 to 115 (STSTMKERMEDLTGGFKLNLPGMGEES).

Belongs to the YbaB/EbfC family. As to quaternary structure, homodimer.

It is found in the cytoplasm. The protein resides in the nucleoid. In terms of biological role, binds to DNA and alters its conformation. May be involved in regulation of gene expression, nucleoid organization and DNA protection. The polypeptide is Nucleoid-associated protein NATL1_00191 (Prochlorococcus marinus (strain NATL1A)).